The following is a 1976-amino-acid chain: Myosin-10 (1976 aa).

Omega-N-methylarginine is present on R18. One can recognise a Myosin N-terminal SH3-like domain in the interval 31 to 81; it reads TAKKLVWIPSERHGFEAASIKEERGDEVMVELAENGKKAMVNKDDIQKMNP. In terms of domain architecture, Myosin motor spans 85–783; sequence SKVEDMAELT…VLAHLEEERD (699 aa). 178 to 185 contacts ATP; the sequence is GESGAGKT. Position 214 is a phosphoserine (L214). K442 is modified (N6-acetyllysine). Residues 661–683 form an actin-binding region; sequence LTKLMATLRNTNPNFVRCIIPNH. The 30-residue stretch at 786-815 folds into the IQ domain; it reads ITDIIIFFQAVCRGYLARKAFAKKQQQLSA. Residues 845-1976 are a coiled coil; it reads LQVTRQEEEL…VNETQPPQSE (1132 aa). Residues 1127–1147 are disordered; the sequence is FESEKASRNKAEKQKRDLSEE. Over residues 1129–1147 the composition is skewed to basic and acidic residues; that stretch reads SEKASRNKAEKQKRDLSEE. Residue S1145 is modified to Phosphoserine. An N6-acetyllysine mark is found at K1241, K1301, and K1645. Disordered stretches follow at residues 1697-1728 and 1872-1976; these read ASSE…SALL and MEKA…PQSE. Positions 1698–1708 are enriched in basic and acidic residues; the sequence is SSERARRHAEQ. Position 1930 is an omega-N-methylarginine (R1930). Residues S1935, S1937, S1938, and S1939 each carry the phosphoserine modification. R1940 bears the Omega-N-methylarginine mark. Phosphoserine is present on residues S1952 and S1956. T1960 is modified (phosphothreonine). Over residues 1967 to 1976 the composition is skewed to polar residues; that stretch reads VNETQPPQSE. At S1975 the chain carries Phosphoserine.

This sequence belongs to the TRAFAC class myosin-kinesin ATPase superfamily. Myosin family. As to quaternary structure, myosin is a hexameric protein that consists of 2 heavy chain subunits (MHC), 2 alkali light chain subunits (MLC) and 2 regulatory light chain subunits (MLC-2). Interacts with PLEKHG6. Interacts with ECPAS. Interacts with KIF26B. Interacts with LARP6. Interacts with MCC. Interacts with CFAP95. (Microbial infection) Interacts with herpes simplex virus 1/HHV-1 envelope glycoprotein B. In terms of processing, phosphorylated by ABL2. In terms of tissue distribution, isoform 1 is expressed in cerebellum and spinal chord. Isoform 2 is expressed in cerebrum and retina. Isoform 3 is expressed in the cerebrum and to a much lower extent in cerebellum.

It is found in the cell projection. Its subcellular location is the lamellipodium. The protein localises to the cell membrane. Its function is as follows. Cellular myosin that appears to play a role in cytokinesis, cell shape, and specialized functions such as secretion and capping. Involved with LARP6 in the stabilization of type I collagen mRNAs for CO1A1 and CO1A2. During cell spreading, plays an important role in cytoskeleton reorganization, focal contacts formation (in the central part but not the margins of spreading cells), and lamellipodial extension; this function is mechanically antagonized by MYH9. (Microbial infection) Acts as a receptor for herpes simplex virus 1/HHV-1 envelope glycoprotein B. The sequence is that of Myosin-10 (MYH10) from Homo sapiens (Human).